Here is a 458-residue protein sequence, read N- to C-terminus: MVSPSIEVLNSIADGKKYITSKELKKHNNPNDLWISILGKVYNVTEWAKEHPGGDAPLINLAGQDVTDAFIAFHPGTAWKHLDKLFTGYHLKDYQVSDISRDYRKLASEFAKAGMFEKKGHGVIYSLCFVSLLLSACVYGVLYSGSFWIHMLSGAILGLAWMQIAYLGHDAGHYQMMATRGWNKFAGIFIGNCITGISIAWWKWTHNAHHIACNSLDYDPDLQHLPMLAVSSKLFNSITSVFYGRQLTFDPLARFFVSYQHYLYYPIMCVARVNLYLQTILLLISKRKIPDRGLNILGTLIFWTWFPLLVSRLPNWPERVAFVLVSFCVTGIQHIQFTLNHFSGDVYVGPPKGDNWFEKQTRGTIDIACSSWMDWFFGGLQFQLEHHLFPRLPRCHLRSISPICRELCKKYNLPYVSLSFYDANVTTLKTLRTAALQARDLTNPAPQNLAWEAFNTHG.

In terms of domain architecture, Cytochrome b5 heme-binding spans 16-100; it reads KKYITSKELK…LKDYQVSDIS (85 aa). H51 and H74 together coordinate heme. Helical transmembrane passes span 122–142 and 147–167; these read GVIYSLCFVSLLLSACVYGVL and FWIHMLSGAILGLAWMQIAYL. Positions 169 to 173 match the Histidine box-1 motif; that stretch reads HDAGH. The helical transmembrane segment at 185–205 threads the bilayer; that stretch reads FAGIFIGNCITGISIAWWKWT. The short motif at 206 to 210 is the Histidine box-2 element; sequence HNAHH. 3 helical membrane passes run 264 to 284, 293 to 313, and 320 to 340; these read YYPIMCVARVNLYLQTILLLI, GLNILGTLIFWTWFPLLVSRL, and VAFVLVSFCVTGIQHIQFTLN. A Histidine box-3 motif is present at residues 383–387; that stretch reads QLEHH.

This sequence belongs to the fatty acid desaturase type 1 family. Fe cation serves as cofactor.

It is found in the membrane. The enzyme catalyses an N-acyl-(4R)-4-hydroxysphinganine + 2 Fe(II)-[cytochrome b5] + O2 + 2 H(+) = a (4R,8E)-4-hydroxysphingenine ceramide + 2 Fe(III)-[cytochrome b5] + 2 H2O. It catalyses the reaction an N-acyl-(4R)-4-hydroxysphinganine + 2 Fe(II)-[cytochrome b5] + O2 + 2 H(+) = a (4R,8Z)-4-hydroxysphing-8-enine ceramide + 2 Fe(III)-[cytochrome b5] + 2 H2O. Functionally, plays a major role as delta(8)-fatty-acid desaturase which introduces a double bond at the 8-position in the long-chain base (LCB) of ceramides with or without a hydroxy group at the 4-position. The enzyme produces both the 8E and 8Z isomers. This structural modification contributes to the quantitative partitioning of ceramides between the two major sphingolipid classes, glucosylceramides and glycosylinositolphosphoryl ceramides. Sphingolipids are important membrane components involved in environmental stress responses, such as resistance to chilling, and act as cell signaling molecules. This chain is Delta(8)-fatty-acid desaturase (sld1), found in Helianthus annuus (Common sunflower).